Reading from the N-terminus, the 327-residue chain is Probable cell division protein WhiA (327 aa).

Positions 275 to 308 (SLEELGRLADPPMTKDAVAGRIRRLLSMADRKAK) form a DNA-binding region, H-T-H motif. The tract at residues 304–327 (DRKAKQDGIPDTESAVTPDLLEDA) is disordered.

The protein belongs to the WhiA family.

Functionally, involved in cell division and chromosome segregation. The protein is Probable cell division protein WhiA of Mycobacterium sp. (strain MCS).